A 795-amino-acid polypeptide reads, in one-letter code: Toll-like receptor 6 (795 aa).

Residues 1 to 27 (MSQDRKPIVGSFHFVCALALIVGSMTP) form the signal peptide. The Extracellular segment spans residues 28–584 (FSNELESMVD…FHMSPLSCDT (557 aa)). Asn-42 carries an N-linked (GlcNAc...) asparagine glycan. 19 LRR repeats span residues 54 to 77 (TKAL…FLSE), 78 to 101 (LRVL…FNQD), 102 to 125 (LEYL…SLRH), 126 to 150 (LDLS…KLTF), 151 to 175 (LGLS…SCIL), 176 to 199 (LDLV…TTVL), 200 to 223 (HLVF…LGHL), 224 to 250 (QLSN…RGPT), 251 to 278 (LLNV…PRPV), 279 to 308 (EYLN…KSLM), 309 to 337 (IEHV…KMLS), 338 to 361 (ISDT…LNFT), 362 to 388 (QNVF…QRNG), 389 to 414 (LKNF…SLNS), 415 to 437 (LNSH…NLSS), 438 to 457 (NMLT…VLDL), 458 to 478 (HNNR…LQEL), 479 to 500 (NVAS…LSVL), and 501 to 524 (VIDH…IRSL). N-linked (GlcNAc...) asparagine glycosylation is present at Asn-114. Cys-117 and Cys-139 form a disulfide bridge. An N-linked (GlcNAc...) asparagine glycan is attached at Asn-144. Residues Asn-195 and Asn-214 are each glycosylated (N-linked (GlcNAc...) asparagine). Cysteines 235 and 265 form a disulfide. N-linked (GlcNAc...) asparagine glycans are attached at residues Asn-253 and Asn-285. The cysteines at positions 348 and 373 are disulfide-linked. Asn-359 is a glycosylation site (N-linked (GlcNAc...) asparagine). Residues Asn-401 and Asn-434 are each glycosylated (N-linked (GlcNAc...) asparagine). A disulfide bridge connects residues Cys-424 and Cys-447. The LRRCT domain occupies 525-576 (TAGNNPFQCTCELRDFVKNIGWVAREVVEGWPDSYRCDYPESSKGTALRDFH). Residues 585–605 (VLLTVTIGATMLVLAVTGAFL) form a helical membrane-spanning segment. Residues 606-795 (CLYFDLPWYV…ALVNEDDVKT (190 aa)) are Cytoplasmic-facing. In terms of domain architecture, TIR spans 640–781 (LQFHAFVSYS…LFWANLRASF (142 aa)).

This sequence belongs to the Toll-like receptor family. Homodimer (via cytoplasmic TIR domain). Heterodimer with TLR2 via their respective extracellular domains. Binds MYD88 via their respective TIR domains. Interacts with CD36, following CD36 stimulation by oxLDL or amyloid-beta 42, and forms a heterodimer with TLR4. The trimeric complex is internalized and triggers inflammatory response. LYN kinase activity facilitates TLR4:TLR6 heterodimerization and signal initiation. The heterodimer TLR2:TLR6 interacts with CD14 and CD36 in response to triacylated lipopeptides. Detected in thymus, spleen, ovary and lung. Expressed in macrohpages.

Its subcellular location is the cell membrane. The protein resides in the cytoplasmic vesicle. It is found in the phagosome membrane. The protein localises to the membrane raft. It localises to the golgi apparatus. Functionally, participates in the innate immune response to Gram-positive bacteria and fungi. Specifically recognizes diacylated and, to a lesser extent, triacylated lipopeptides. In response to diacylated lipopeptides, forms the activation cluster TLR2:TLR6:CD14:CD36, this cluster triggers signaling from the cell surface and subsequently is targeted to the Golgi in a lipid-raft dependent pathway. Acts via MYD88 and TRAF6, leading to NF-kappa-B activation, cytokine secretion and the inflammatory response. Recognizes mycoplasmal macrophage-activating lipopeptide-2kD (MALP-2), soluble tuberculosis factor (STF), phenol-soluble modulin (PSM) and B.burgdorferi outer surface protein A lipoprotein (OspA-L) cooperatively with TLR2. In complex with TLR4, promotes sterile inflammation in monocytes/macrophages in response to oxidized low-density lipoprotein (oxLDL) or amyloid-beta 42. In this context, the initial signal is provided by oxLDL- or amyloid-beta 42-binding to CD36. This event induces the formation of a heterodimer of TLR4 and TLR6, which is rapidly internalized and triggers inflammatory response, leading to the NF-kappa-B-dependent production of CXCL1, CXCL2 and CCL9 cytokines, via MYD88 signaling pathway, and CCL5 cytokine, via TICAM1 signaling pathway, as well as IL1B secretion. The polypeptide is Toll-like receptor 6 (Tlr6) (Mus musculus (Mouse)).